We begin with the raw amino-acid sequence, 377 residues long: ATP phosphoribosyltransferase regulatory subunit (377 aa).

It belongs to the class-II aminoacyl-tRNA synthetase family. HisZ subfamily. Heteromultimer composed of HisG and HisZ subunits.

The protein resides in the cytoplasm. The protein operates within amino-acid biosynthesis; L-histidine biosynthesis; L-histidine from 5-phospho-alpha-D-ribose 1-diphosphate: step 1/9. Required for the first step of histidine biosynthesis. May allow the feedback regulation of ATP phosphoribosyltransferase activity by histidine. In Sinorhizobium medicae (strain WSM419) (Ensifer medicae), this protein is ATP phosphoribosyltransferase regulatory subunit.